A 163-amino-acid chain; its full sequence is Nucleotide-binding protein BLi01194 (163 aa).

It belongs to the YajQ family.

In terms of biological role, nucleotide-binding protein. This chain is Nucleotide-binding protein BLi01194, found in Bacillus licheniformis (strain ATCC 14580 / DSM 13 / JCM 2505 / CCUG 7422 / NBRC 12200 / NCIMB 9375 / NCTC 10341 / NRRL NRS-1264 / Gibson 46).